The sequence spans 93 residues: Alpha-defensin 2 (93 aa).

Residues 1 to 19 form the signal peptide; the sequence is MKPLVLLSALVLLSFQVQA. Positions 20–58 are excised as a propeptide; it reads DPIQNTDEETKTEEQSGEEDQAVSVSFGDREGASLQEES. A disordered region spans residues 23–49; sequence QNTDEETKTEEQSGEEDQAVSVSFGDR. 3 disulfide bridges follow: Cys-64–Cys-92, Cys-66–Cys-81, and Cys-71–Cys-91.

Belongs to the alpha-defensin family. As to expression, paneth cells of the small bowel.

It localises to the secreted. Its function is as follows. Has broad-spectrum antimicrobial properties. Has antibacterial activity against the Gram-positive bacterium L.monocytogenes EGD and the Gram-negative bacteria E.coli ML-35p and avirulent S.typhimurium 7953, but not against the mouse-virulent S.typhimurium 14028S. Probably contributes to the antimicrobial barrier function of the small bowel mucosa. The polypeptide is Alpha-defensin 2 (Defa2) (Mus musculus (Mouse)).